Consider the following 346-residue polypeptide: tRNA (guanine-N(7)-)-methyltransferase (346 aa).

S-adenosyl-L-methionine contacts are provided by residues Gly-101 and 124-125; that span reads EI. Residues 149–191 are disordered; it reads LKSAGGGGSDAAPESPAAPPTPSEAASPDSTTPSEQQAPTTLV. Residues 171–182 show a composition bias toward low complexity; that stretch reads SEAASPDSTTPS. Residues 204 to 205 and Cys-224 each bind S-adenosyl-L-methionine; that span reads NT. The active site involves Asp-227. 318-320 lines the S-adenosyl-L-methionine pocket; that stretch reads TEE.

The protein belongs to the class I-like SAM-binding methyltransferase superfamily. TrmB family. In terms of assembly, forms a complex with trm82.

Its subcellular location is the nucleus. It catalyses the reaction guanosine(46) in tRNA + S-adenosyl-L-methionine = N(7)-methylguanosine(46) in tRNA + S-adenosyl-L-homocysteine. Its pathway is tRNA modification; N(7)-methylguanine-tRNA biosynthesis. Its function is as follows. Catalyzes the formation of N(7)-methylguanine at position 46 (m7G46) in tRNA. The sequence is that of tRNA (guanine-N(7)-)-methyltransferase (trm8) from Aspergillus terreus (strain NIH 2624 / FGSC A1156).